Consider the following 38-residue polypeptide: Cytochrome b6-f complex subunit 5 (38 aa).

Residues 5–25 (LLLGIVLGLIPVTLAGLFVAA) traverse the membrane as a helical segment.

This sequence belongs to the PetG family. In terms of assembly, the 4 large subunits of the cytochrome b6-f complex are cytochrome b6, subunit IV (17 kDa polypeptide, PetD), cytochrome f and the Rieske protein, while the 4 small subunits are PetG, PetL, PetM and PetN. The complex functions as a dimer.

The protein resides in the cellular thylakoid membrane. Functionally, component of the cytochrome b6-f complex, which mediates electron transfer between photosystem II (PSII) and photosystem I (PSI), cyclic electron flow around PSI, and state transitions. PetG is required for either the stability or assembly of the cytochrome b6-f complex. This Picosynechococcus sp. (strain ATCC 27264 / PCC 7002 / PR-6) (Agmenellum quadruplicatum) protein is Cytochrome b6-f complex subunit 5.